We begin with the raw amino-acid sequence, 160 residues long: Phosphopantetheine adenylyltransferase (160 aa).

S10 is a binding site for substrate. Residues 10–11 (SF) and H18 each bind ATP. Substrate contacts are provided by K42, L74, and R88. Residues 89–91 (GLR), E99, and 124–130 (YSFLSSS) each bind ATP.

This sequence belongs to the bacterial CoaD family. Homohexamer. Requires Mg(2+) as cofactor.

The protein localises to the cytoplasm. The catalysed reaction is (R)-4'-phosphopantetheine + ATP + H(+) = 3'-dephospho-CoA + diphosphate. It functions in the pathway cofactor biosynthesis; coenzyme A biosynthesis; CoA from (R)-pantothenate: step 4/5. In terms of biological role, reversibly transfers an adenylyl group from ATP to 4'-phosphopantetheine, yielding dephospho-CoA (dPCoA) and pyrophosphate. The protein is Phosphopantetheine adenylyltransferase of Bacillus velezensis (strain DSM 23117 / BGSC 10A6 / LMG 26770 / FZB42) (Bacillus amyloliquefaciens subsp. plantarum).